A 185-amino-acid polypeptide reads, in one-letter code: Ribosome-recycling factor (185 aa).

It belongs to the RRF family.

The protein resides in the cytoplasm. Its function is as follows. Responsible for the release of ribosomes from messenger RNA at the termination of protein biosynthesis. May increase the efficiency of translation by recycling ribosomes from one round of translation to another. This chain is Ribosome-recycling factor, found in Photobacterium profundum (strain SS9).